Consider the following 211-residue polypeptide: MIIRKQIFPFLSQNRPWTIINRIQSERYSASYEPSPELLKQSSRRLEQAGYSVKNAETITNLMRTITGEALTELEKNIGFKAKQESVSFQQKRTFLQIRKYLETIEENEFDKVRKSSDKLINEIEKTKSSLREDVKTALSEVRLNLNLEKGRMKDAATSRNTNIHENETKILNEVDILHKEINDMKIQTNQWFTGFVGVVSSVVLIILFYF.

Residues 105-143 (IEENEFDKVRKSSDKLINEIEKTKSSLREDVKTALSEVR) are a coiled coil. Residues 191 to 211 (QWFTGFVGVVSSVVLIILFYF) form a helical membrane-spanning segment.

The protein belongs to the CCDC90 family.

It is found in the mitochondrion. It localises to the membrane. This is an uncharacterized protein from Schizosaccharomyces pombe (strain 972 / ATCC 24843) (Fission yeast).